We begin with the raw amino-acid sequence, 809 residues long: Probable replication endonuclease from prophage-like region (809 aa).

Residues Tyr503 and Tyr507 each act as O-(5'-phospho-DNA)-tyrosine intermediate in the active site.

This sequence belongs to the phage GPA family.

Possible endonuclease which induces a single-strand cut and initiates DNA replication. The polypeptide is Probable replication endonuclease from prophage-like region (Salmonella typhimurium (strain LT2 / SGSC1412 / ATCC 700720)).